The sequence spans 109 residues: Parvalbumin beta (109 aa).

S1 bears the N-acetylserine mark. 2 consecutive EF-hand domains span residues 38–73 and 77–109; these read KTPD…FASS and LTDK…VKEA. Ca(2+) is bound by residues D51, D53, S55, F57, E59, E62, D90, D92, D94, K96, and E101.

The protein belongs to the parvalbumin family.

Functionally, in muscle, parvalbumin is thought to be involved in relaxation after contraction. It binds two calcium ions. This chain is Parvalbumin beta, found in Opsanus tau (Oyster toadfish).